The sequence spans 663 residues: Polyunsaturated fatty acid lipoxygenase ALOX15 (663 aa).

A PLAT domain is found at 2 to 115; that stretch reads GVYRVCVSTG…VQSLPVGTGC (114 aa). The 548-residue stretch at 116–663 folds into the Lipoxygenase domain; the sequence is TTVGDPQGLF…PSIVENSVAI (548 aa). Fe cation contacts are provided by His-361, His-366, His-541, His-545, and Ile-663.

This sequence belongs to the lipoxygenase family. Interacts with PEBP1; in response to IL13/interleukin-13, prevents the interaction of PEBP1 with RAF1 to activate the ERK signaling cascade. The cofactor is Fe cation. In terms of tissue distribution, detected in reticulocytes (at protein level).

Its subcellular location is the cytoplasm. It localises to the cytosol. It is found in the cell membrane. The protein resides in the lipid droplet. It catalyses the reaction (5Z,8Z,11Z,14Z)-eicosatetraenoate + O2 = (12S)-hydroperoxy-(5Z,8Z,10E,14Z)-eicosatetraenoate. The enzyme catalyses (5Z,8Z,11Z,14Z)-eicosatetraenoate + O2 = (15S)-hydroperoxy-(5Z,8Z,11Z,13E)-eicosatetraenoate. It carries out the reaction (9Z,12Z)-octadecadienoate + O2 = (13S)-hydroperoxy-(9Z,11E)-octadecadienoate. The catalysed reaction is (5Z,8Z,11Z,14Z)-eicosatetraenoate + 2 O2 = (14R,15S)-dihydroperoxy-(5Z,8Z,10E,12E)-eicosatetraenoate. It catalyses the reaction (5Z,8Z,11Z,14Z)-eicosatetraenoate + 2 O2 = (8S,15S)-dihydroperoxy-(5Z,9E,11Z,13E)-eicosatetraenoate. The enzyme catalyses (14S,15R)-epoxy-(5Z,8Z,11Z)-eicosatrienoate + O2 = (8S)-hydroperoxy-(14S,15R)-epoxy-(5Z,9E,11Z)-eicosatrienoate. It carries out the reaction (14S,15R)-epoxy-(5Z,8Z,11Z)-eicosatrienoate + O2 = (12S)-hydroperoxy-(14S,15R)-epoxy-(5Z,8Z,10E)-eicosatrienoate. The catalysed reaction is (14R,15S)-epoxy-(5Z,8Z,11Z)-eicosatrienoate + O2 = (5S)-hydroperoxy-(14R,15S)-epoxy-(6E,8Z,11Z)-eicosatrienoate. It catalyses the reaction (14R,15S)-epoxy-(5Z,8Z,11Z)-eicosatrienoate + O2 = (12S)-hydroperoxy-(14R,15S)-epoxy-(5Z,8Z,10E)-eicosatrienoate. The enzyme catalyses (15R)-hydroperoxy-(5Z,8Z,11Z,13E)-eicosatetraenoate = 15-oxo-(5Z,8Z,11Z,13E)-eicosatetraenoate + H2O. It carries out the reaction (15S)-hydroperoxy-(5Z,8Z,11Z,13E)-eicosatetraenoate = (14S,15S)-epoxy-(5Z,8Z,10E,12E)-eicosatetraenoate + H2O. The catalysed reaction is (12S)-hydroperoxy-(5Z,8Z,10E,14Z)-eicosatetraenoate = (8S)-hydroxy-(11S,12S)-epoxy-(5Z,9E,14Z)-eicosatrienoate. It catalyses the reaction (4Z,7Z,10Z,13Z,16Z)-docosapentaenoate + O2 = 14-hydroperoxy-(4Z,7Z,10Z,12E,16Z)-docosapentaenoate. The enzyme catalyses (7Z,10Z,13Z,16Z,19Z)-docosapentaenoate + O2 = 14-hydroperoxy-(7Z,10Z,12E,16Z,19Z)-docosapentaenoate. It carries out the reaction (4Z,7Z,10Z,13Z,16Z,19Z)-docosahexaenoate + O2 = (14S)-hydroperoxy-(4Z,7Z,10Z,12E,16Z,19Z)-docosahexaenoate. The catalysed reaction is (4Z,7Z,10Z,13Z,16Z,19Z)-docosahexaenoate + O2 = (17S)-hydroperoxy-(4Z,7Z,10Z,13Z,15E,19Z)-docosahexaenoate. It catalyses the reaction (7S)-hydroperoxy-(4Z,8E,10Z,13Z,16Z,19Z)-docosahexaenoate + O2 = (7S,14S)-dihydroperoxy-(4Z,8E,10Z,12E,16Z,19Z)-docosahexaenoate. The enzyme catalyses (7S)-hydroperoxy-(4Z,8E,10Z,13Z,16Z,19Z)-docosahexaenoate + O2 = (7S,17S)-dihydroperoxy-(4Z,8E,10Z,13Z,15E,19Z)-docosahexaenoate. It carries out the reaction (4Z,7Z,10Z,13Z,16Z,19Z)-docosahexaenoate + O2 = (11S)-hydroperoxy-(4Z,7Z,9E,13Z,16Z,19Z)-docosahexaenoate. The catalysed reaction is N-(5Z,8Z,11Z,14Z)-eicosatetraenoyl-taurine + O2 = N-(15S)-hydroperoxy-(5Z,8Z,11Z,13E)-eicosatetraenoyl-taurine. It catalyses the reaction N-(5Z,8Z,11Z,14Z)-eicosatetraenoyl-gamma-aminobutanoate + O2 = N-(15S)-hydroperoxy-(5Z,8Z,11Z,13E)-eicosatetraenoyl-gamma-aminobutanoate. The enzyme catalyses N-(5Z,8Z,11Z,14Z)-eicosatetraenoyl-glycine + O2 = N-(15S)-hydroperoxy-(5Z,8Z,11Z,13E)-eicosatetraenoyl-glycine. It carries out the reaction N-(5Z,8Z,11Z,14Z)-eicosatetraenoyl-L-alanine + O2 = N-(15S)-hydroperoxy-(5Z,8Z,11Z,13E)-eicosatetraenoyl-alanine. The catalysed reaction is N-(5Z,8Z,11Z,14Z)-eicosatetraenoyl-taurine + O2 = N-(12S)-hydroperoxy-(5Z,8Z,10E,14Z)-eicosatetraenoyl-taurine. It catalyses the reaction N-(5Z,8Z,11Z,14Z)-eicosatetraenoyl-gamma-aminobutanoate + O2 = N-(12S)-hydroperoxy-(5Z,8Z,10E,14Z)-eicosatetraenoyl-gamma-aminobutanoate. The enzyme catalyses N-(5Z,8Z,11Z,14Z)-eicosatetraenoyl-glycine + O2 = N-(12S)-hydroperoxy-(5Z,8Z,10E,14Z)-eicosatetraenoyl-glycine. It carries out the reaction N-(5Z,8Z,11Z,14Z)-eicosatetraenoyl-L-alanine + O2 = N-(12S)-hydroperoxy-(5Z,8Z,10E,14Z)-eicosatetraenoyl-alanine. It functions in the pathway lipid metabolism; hydroperoxy eicosatetraenoic acid biosynthesis. In terms of biological role, non-heme iron-containing dioxygenase that catalyzes the stereo-specific peroxidation of free and esterified polyunsaturated fatty acids generating a spectrum of bioactive lipid mediators. It inserts peroxyl groups at C12 or C15 of arachidonate ((5Z,8Z,11Z,14Z)-eicosatetraenoate) producing both 12-hydroperoxyeicosatetraenoate/12-HPETE and 15-hydroperoxyeicosatetraenoate/15-HPETE. It may then act on 12-HPETE to produce hepoxilins, which may show pro-inflammatory properties. Can also peroxidize linoleate ((9Z,12Z)-octadecadienoate) to 13-hydroperoxyoctadecadienoate. May participate in the sequential oxidations of DHA ((4Z,7Z,10Z,13Z,16Z,19Z)-docosahexaenoate) to generate specialized pro-resolving mediators (SPMs)like resolvin D5 ((7S,17S)-diHPDHA) and (7S,14S)-diHPDHA, that actively down-regulate the immune response and have anti-aggregation properties with platelets. Can convert epoxy fatty acids to hydroperoxy-epoxides derivatives followed by an intramolecular nucleophilic substitution leading to the formation of monocyclic endoperoxides. Plays an important role during the maintenance of self-tolerance by peroxidizing membrane-bound phosphatidylethanolamine which can then signal the sorting process for clearance of apoptotic cells during inflammation and prevent an autoimmune response. In addition to its role in the immune and inflammatory responses, this enzyme may play a role in epithelial wound healing in the cornea through production of lipoxin A4 (LXA(4)) and docosahexaenoic acid-derived neuroprotectin D1 (NPD1; 10R,17S-HDHA), both lipid autacoids exhibit anti-inflammatory and neuroprotective properties. Furthermore, it may regulate actin polymerization which is crucial for several biological processes such as the phagocytosis of apoptotic cells. It is also implicated in the generation of endogenous ligands for peroxisome proliferator activated receptor (PPAR-gamma), hence modulating macrophage development and function. It may also exert a negative effect on skeletal development by regulating bone mass through this pathway. As well as participates in ER stress and downstream inflammation in adipocytes, pancreatic islets, and liver. Finally, it is also involved in the cellular response to IL13/interleukin-13. The polypeptide is Polyunsaturated fatty acid lipoxygenase ALOX15 (Oryctolagus cuniculus (Rabbit)).